Consider the following 74-residue polypeptide: Putative antitoxin VapB48 (74 aa).

Its function is as follows. Possibly the antitoxin component of a type II toxin-antitoxin (TA) system. Its cognate toxin is VapC48 (Potential). The polypeptide is Putative antitoxin VapB48 (vapB48) (Mycobacterium tuberculosis (strain CDC 1551 / Oshkosh)).